Reading from the N-terminus, the 910-residue chain is Importin subunit beta-2 (910 aa).

19 HEAT repeats span residues 12 to 39 (VLVE…NLLE), 44 to 82 (IPDL…VSSL), 93 to 126 (YTKS…RWGI), 132 to 169 (VLPQ…LDRD), 177 to 207 (DFMI…QFVL), 220 to 247 (FLET…VYLL), 259 to 286 (GSIV…FWLA), 302 to 406 (DKIV…LSSF), 414 to 442 (IILP…GAIA), 454 to 481 (PELY…TLGR), 499 to 532 (FVPL…EEQA), 540 to 573 (LEPI…ADYV), 581 to 619 (RYIE…VALR), 627 to 677 (AETY…ALGS), 690 to 721 (LGQI…MYCF), 729 to 764 (DALL…LQLG), 772 to 807 (KPLL…VYNP), 815 to 848 (ELFY…LACN), and 857 to 888 (PMFV…VELF). Positions 34-122 (ALNLLEKAKD…SGNVITTIIS (89 aa)) constitute an Importin N-terminal domain. A disordered region spans residues 333–381 (DREEDIRPQHAKGKSRITLNTQGPITQQGSSNADADELEDEDEDDDEFD). Residues 349 to 364 (ITLNTQGPITQQGSSN) show a composition bias toward polar residues. Positions 366–381 (DADELEDEDEDDDEFD) are enriched in acidic residues.

It belongs to the importin beta family. Importin beta-2 subfamily. In terms of assembly, interacts with Ran; interacts specifically with the GTP-bound form of Ran (GTP-Ran), protecting it from GTP hydrolysis and nucleotide exchange. Interacts with nucleoporins.

It localises to the cytoplasm. The protein resides in the nucleus envelope. Functions in nuclear protein import as nuclear transport receptor. Serves as receptor for arginine/glycine-rich nuclear localization signals (rg-NLS) and PY-NLS in cargo substrates. Its predominant cargo substrate seems to be mRNA-binding proteins. Mediates docking of the importin/substrate complex to the nuclear pore complex (NPC) through binding to repeat-containing nucleoporins. The complex is subsequently translocated through the pore by an energy requiring, Ran-dependent mechanism. At the nucleoplasmic side of the NPC, GTP-Ran binding leads to release of the cargo. The importin is re-exported from the nucleus to the cytoplasm where GTP hydrolysis releases Ran from importin. The directionality of nuclear import is thought to be conferred by an asymmetric distribution of the GTP- and GDP-bound forms of Ran between the cytoplasm and nucleus. The sequence is that of Importin subunit beta-2 from Schizosaccharomyces pombe (strain 972 / ATCC 24843) (Fission yeast).